Consider the following 498-residue polypeptide: uncharacterized protein (498 aa).

The next 11 membrane-spanning stretches (helical) occupy residues 54-74, 100-120, 128-148, 150-170, 188-208, 221-241, 302-322, 326-346, 353-373, 381-401, and 446-466; these read LLKMDLVISPIIGFLYLMAFL, VAVSIFYVLYILVETPSVVLV, MLAFISFAWSMTVLFSGFMSS, GGLIATRLILGLLEGCLFPAL, SYLFASAGLAGAFGGLFAYAL, WIYIVEGLVSFIGVPLCLFAL, VLYGFSSFLPVIIKGLGFVGL, YMTIPVYIAGVISFLFVAWLS, AVYLISASTVVAVGYIIMLAS, TATYIIAIGCYIGPGLNLGWL, and AFTLGCVIVGGLAYVVMFFSL.

It belongs to the major facilitator superfamily. Allantoate permease family.

It localises to the membrane. This is an uncharacterized protein from Schizosaccharomyces pombe (strain 972 / ATCC 24843) (Fission yeast).